The following is a 761-amino-acid chain: Subtilisin-like protease SBT3.15 (761 aa).

The signal sequence occupies residues 1–21; it reads MENSFLSSKLVFLLAIALVLF. Residues 22–120 constitute a propeptide, activation peptide; sequence LNTELSFLTA…VIPNRILKLK (99 aa). The Inhibitor I9 domain occupies 41–119; it reads VYIVYLGQRE…HVIPNRILKL (79 aa). Positions 134-613 constitute a Peptidase S8 domain; it reads PTSFSSSSSA…GGLVNPEKAA (480 aa). The N-linked (GlcNAc...) asparagine glycan is linked to Asn151. Asp164 serves as the catalytic Charge relay system. N-linked (GlcNAc...) asparagine glycosylation is present at Asn197. Catalysis depends on His241, which acts as the Charge relay system. N-linked (GlcNAc...) asparagine glycosylation is found at Asn256 and Asn384. Catalysis depends on Ser544, which acts as the Charge relay system. N-linked (GlcNAc...) asparagine glycosylation occurs at Asn636.

Belongs to the peptidase S8 family.

It localises to the secreted. The chain is Subtilisin-like protease SBT3.15 from Arabidopsis thaliana (Mouse-ear cress).